We begin with the raw amino-acid sequence, 1377 residues long: Carboxypeptidase D (1377 aa).

The N-terminal stretch at 1 to 37 (MASGRDERPPWRLGRLRLLPPPPLLLLLLLLRSSAQA) is a signal peptide. At 38–1296 (AHIKKAEATT…DNRIFGLPRE (1259 aa)) the chain is on the extracellular side. The Peptidase M14 1 domain maps to 62-379 (HYYHEAALGE…ESLITLIEKV (318 aa)). 2 residues coordinate Zn(2+): His-138 and Glu-141. Positions 161 to 163 (RGD) match the Cell attachment site motif. Residues Asn-171 and Asn-216 are each glycosylated (N-linked (GlcNAc...) asparagine). The disordered stretch occupies residues 188-231 (RAREGDCGLGDSGPPGTSGRDNSRGRDLNRSFPDQFSTGEPPSL). His-256 is a binding site for Zn(2+). Tyr-264 carries the phosphotyrosine modification. Ser-269 carries the phosphoserine modification. Glu-349 functions as the Proton donor/acceptor in the catalytic mechanism. N-linked (GlcNAc...) asparagine glycans are attached at residues Asn-398, Asn-409, Asn-428, and Asn-521. The Peptidase M14 2 domain occupies 501–791 (HHHHFPDMEI…RSLIQFMKQV (291 aa)). Zn(2+)-binding residues include His-563 and Glu-566. Residue Asn-625 is glycosylated (N-linked (GlcNAc...) asparagine). A Zn(2+)-binding site is contributed by His-670. Glu-761 serves as the catalytic Proton donor/acceptor. N-linked (GlcNAc...) asparagine glycosylation is found at Asn-810, Asn-854, Asn-866, Asn-878, Asn-952, and Asn-975. Positions 874 to 898 (ADANNESKKGRGHSTSTDDTSDPTS) are disordered. The Peptidase M14 3 domain maps to 929–1208 (RYHSYKDLSE…KSLLSMLVEV (280 aa)). Residues 1038–1047 (RERAQEKDCT) are compositionally biased toward basic and acidic residues. Residues 1038-1064 (RERAQEKDCTSKTGHTNAHGKDLDTDF) form a disordered region. 2 N-linked (GlcNAc...) asparagine glycosylation sites follow: Asn-1067 and Asn-1139. A helical membrane pass occupies residues 1297 to 1317 (LVVTVSGATMSALILTACIIW). Residues Cys-1314, Cys-1318, and Cys-1320 are each lipidated (S-palmitoyl cysteine). Over 1318–1377 (CICSIKSNRHKDGFHRLRQHHDEYEDEIRMMSTGSKKSLLSHEFQDETDTEEETLYSSKH) the chain is Cytoplasmic. A phosphoserine mark is found at Ser-1355 and Ser-1358. The interval 1356–1377 (LLSHEFQDETDTEEETLYSSKH) is disordered. 2 positions are modified to phosphothreonine: Thr-1365 and Thr-1367.

The protein belongs to the peptidase M14 family. Requires Zn(2+) as cofactor.

It localises to the cell membrane. The enzyme catalyses Releases C-terminal Arg and Lys from polypeptides.. The protein is Carboxypeptidase D (Cpd) of Mus musculus (Mouse).